The chain runs to 150 residues: Lymphocyte antigen 6 complex locus protein G5c (150 aa).

The signal sequence occupies residues 1 to 41 (MRFMAGPAGSQSLGPLCFHSSPQALYTVLLIVLVMMSLVFG). In terms of domain architecture, UPAR/Ly6 spans 60–150 (LRCYRCLLET…DPQNRGLYTP (91 aa)). Intrachain disulfides connect Cys62–Cys89, Cys65–Cys74, Cys81–Cys107, and Cys134–Cys139. Asn96 carries an N-linked (GlcNAc...) asparagine glycan.

As to quaternary structure, forms oligomers. N-glycosylated. Detected in T-cell lines and fetal and adult lung.

The protein localises to the secreted. In terms of biological role, may have a role in hematopoietic cell differentiation. This is Lymphocyte antigen 6 complex locus protein G5c (LY6G5C) from Homo sapiens (Human).